Here is a 439-residue protein sequence, read N- to C-terminus: Dolichyl-diphosphooligosaccharide--protein glycosyltransferase 48 kDa subunit (439 aa).

The N-terminal stretch at 1 to 26 (MEPSTAARAWALFWLLPPLLGAVCAS) is a signal peptide. Over 27 to 410 (GPRTLVLLDN…YERFIPSAYP (384 aa)) the chain is Lumenal. The chain crosses the membrane as a helical span at residues 411 to 430 (YYASAFSMMLGLFIFSIVFL). Residues 431–439 (HMKEKEKSD) lie on the Cytoplasmic side of the membrane.

Belongs to the DDOST 48 kDa subunit family. In terms of assembly, component of the oligosaccharyltransferase (OST) complex. OST exists in two different complex forms which contain common core subunits RPN1, RPN2, OST48, OST4, DAD1 and TMEM258, either STT3A or STT3B as catalytic subunits, and form-specific accessory subunits. STT3A complex assembly occurs through the formation of 3 subcomplexes. Subcomplex 1 contains RPN1 and TMEM258, subcomplex 2 contains the STT3A-specific subunits STT3A, DC2/OSTC, and KCP2 as well as the core subunit OST4, and subcomplex 3 contains RPN2, DAD1, and OST48. The STT3A complex can form stable complexes with the Sec61 complex or with both the Sec61 and TRAP complexes. Interacts with SMIM22.

The protein resides in the endoplasmic reticulum membrane. The protein operates within protein modification; protein glycosylation. Its function is as follows. Subunit of the oligosaccharyl transferase (OST) complex that catalyzes the initial transfer of a defined glycan (Glc(3)Man(9)GlcNAc(2) in eukaryotes) from the lipid carrier dolichol-pyrophosphate to an asparagine residue within an Asn-X-Ser/Thr consensus motif in nascent polypeptide chains, the first step in protein N-glycosylation. N-glycosylation occurs cotranslationally and the complex associates with the Sec61 complex at the channel-forming translocon complex that mediates protein translocation across the endoplasmic reticulum (ER). All subunits are required for a maximal enzyme activity. Required for the assembly of both SST3A- and SS3B-containing OST complexes. The chain is Dolichyl-diphosphooligosaccharide--protein glycosyltransferase 48 kDa subunit from Pongo abelii (Sumatran orangutan).